The following is a 129-amino-acid chain: Small ribosomal subunit protein uS12 (129 aa).

D89 carries the post-translational modification 3-methylthioaspartic acid. The disordered stretch occupies residues 101–129 (SLDTSGVADRKQSRSKYGAKQPKAGAAKK). The segment covering 116-129 (KYGAKQPKAGAAKK) has biased composition (low complexity).

It belongs to the universal ribosomal protein uS12 family. In terms of assembly, part of the 30S ribosomal subunit. Contacts proteins S8 and S17. May interact with IF1 in the 30S initiation complex.

In terms of biological role, with S4 and S5 plays an important role in translational accuracy. Interacts with and stabilizes bases of the 16S rRNA that are involved in tRNA selection in the A site and with the mRNA backbone. Located at the interface of the 30S and 50S subunits, it traverses the body of the 30S subunit contacting proteins on the other side and probably holding the rRNA structure together. The combined cluster of proteins S8, S12 and S17 appears to hold together the shoulder and platform of the 30S subunit. This Chlorobaculum parvum (strain DSM 263 / NCIMB 8327) (Chlorobium vibrioforme subsp. thiosulfatophilum) protein is Small ribosomal subunit protein uS12.